A 460-amino-acid polypeptide reads, in one-letter code: DNA repair protein RAD57 (460 aa).

125–132 (GESSTGKS) provides a ligand contact to ATP.

The protein belongs to the RecA family.

It is found in the nucleus. Functionally, participates in the repair of X-ray-induced damage to DNA and in meiosis. It may act in part by stabilizing a repair complex of other RAD genes. This Saccharomyces cerevisiae (strain ATCC 204508 / S288c) (Baker's yeast) protein is DNA repair protein RAD57 (RAD57).